The following is a 622-amino-acid chain: MTVSKSSLSALTLGAIGVVYGDIGTSVLYAVKEVFGSGHVPFTSDNVYGILSIFFWTLTIIVSLKYVTLVLRADNNGEGGLIAMLALASQSVKDKPALRRVLLLVGIFGTCLFYGDGVITPAISVLSAVEGLEVVSPAFNKFVIPLTLLVLFGLFWVQKRGTAGIGKFFGPITVVWFACIAVLGVAQIATHPTVLWAISPYHALSFIWRQPGTSFIILGAVVLCVTGAEALYADLGHFGKKPIRVAWFAVVMPALTLNYFGQGALLLNNPAAVKNPFFLMAPDWALLPLVGLATLATVIASQALISGAFSVTKQVILLGYLPRLKIMHTNVKEVGQIYLPFVNWGLFVTIVLAVMIFKSSSNLASAYGIAVCTDMLITTILTFFVIRYSWKYPLWLCVAATSFFFVVDFAFWASNLLKLFDGGWFPLLIGGAIFILMITWKDGRRLLNDKLRADAIDLNSFLEAVFVSPPVRVEGTAVFLTVEAGTVPNAMLHNLKHNKVLHANNLFVTVHNHEVPWIGMEKRLEIESLGHDCWQVIINYGFKNDPNIPKALQHIKGRGCDLNDMTTSYFLSRDTIVPTIGSGMAQWREKLFSQMHHNASGAADFLRLPNNAVVELGSKIEI.

12 helical membrane-spanning segments follow: residues Leu-11–Val-31, Ile-50–Val-70, Val-101–Pro-121, Pro-137–Val-157, Phe-168–Ile-188, Phe-215–Leu-235, Trp-247–Leu-267, Ala-285–Ile-305, Ile-337–Phe-357, Ala-366–Ile-386, Pro-393–Ala-413, and Leu-419–Thr-439.

Belongs to the HAK/KUP transporter (TC 2.A.72) family.

It localises to the cell inner membrane. The catalysed reaction is K(+)(in) + H(+)(in) = K(+)(out) + H(+)(out). In terms of biological role, transport of potassium into the cell. Likely operates as a K(+):H(+) symporter. This chain is Probable potassium transport system protein Kup 1, found in Albidiferax ferrireducens (strain ATCC BAA-621 / DSM 15236 / T118) (Rhodoferax ferrireducens).